The chain runs to 188 residues: Peptidyl-tRNA hydrolase (188 aa).

Tyr15 provides a ligand contact to tRNA. His20 serves as the catalytic Proton acceptor. 3 residues coordinate tRNA: Phe63, Asn65, and Asn111.

It belongs to the PTH family. As to quaternary structure, monomer.

The protein localises to the cytoplasm. The catalysed reaction is an N-acyl-L-alpha-aminoacyl-tRNA + H2O = an N-acyl-L-amino acid + a tRNA + H(+). Hydrolyzes ribosome-free peptidyl-tRNAs (with 1 or more amino acids incorporated), which drop off the ribosome during protein synthesis, or as a result of ribosome stalling. In terms of biological role, catalyzes the release of premature peptidyl moieties from peptidyl-tRNA molecules trapped in stalled 50S ribosomal subunits, and thus maintains levels of free tRNAs and 50S ribosomes. The chain is Peptidyl-tRNA hydrolase from Hydrogenobaculum sp. (strain Y04AAS1).